Consider the following 230-residue polypeptide: GTP cyclohydrolase III (230 aa).

Belongs to the archaeal-type GTP cyclohydrolase family.

The catalysed reaction is GTP + 3 H2O = 2-amino-5-formylamino-6-(5-phospho-D-ribosylamino)pyrimidin-4(3H)-one + 2 phosphate + 2 H(+). Catalyzes the formation of 2-amino-5-formylamino-6-ribofuranosylamino-4(3H)-pyrimidinone ribonucleotide monophosphate and inorganic phosphate from GTP. Also has an independent pyrophosphate phosphohydrolase activity. This chain is GTP cyclohydrolase III, found in Saccharolobus islandicus (strain M.14.25 / Kamchatka #1) (Sulfolobus islandicus).